Here is a 531-residue protein sequence, read N- to C-terminus: RNA-binding protein RO60 (531 aa).

The TROVE domain occupies 24 to 360; the sequence is VRNNAGGFVY…AFGNVQPANT (337 aa). Residues 128 to 274 are RNA-binding; the sequence is RTGTMLLHFL…TNGLTWLLRN (147 aa). Residues 352–531 form a VWFA-like domain region; it reads FGNVQPANTR…VMTAFARGEV (180 aa). A divalent metal cation contacts are provided by serine 369, serine 371, and threonine 438.

This sequence belongs to the Ro 60 kDa family. Forms oligomers upon binding DrY RNA, The multimers are of an average size of 700 kDa and are composed of around 12 molecules of Rsr-DrY RNA.

It localises to the cytoplasm. Functionally, binds to several small RNAs that accumulate during recovery from UV irradiation. Contributes to the resistance of D.radiodurans to ultraviolet irradiation. The protein is RNA-binding protein RO60 of Deinococcus radiodurans (strain ATCC 13939 / DSM 20539 / JCM 16871 / CCUG 27074 / LMG 4051 / NBRC 15346 / NCIMB 9279 / VKM B-1422 / R1).